Here is a 335-residue protein sequence, read N- to C-terminus: Tetraacyldisaccharide 4'-kinase (335 aa).

59 to 66 (TAGGNGKT) serves as a coordination point for ATP.

This sequence belongs to the LpxK family.

It catalyses the reaction a lipid A disaccharide + ATP = a lipid IVA + ADP + H(+). It participates in glycolipid biosynthesis; lipid IV(A) biosynthesis; lipid IV(A) from (3R)-3-hydroxytetradecanoyl-[acyl-carrier-protein] and UDP-N-acetyl-alpha-D-glucosamine: step 6/6. Functionally, transfers the gamma-phosphate of ATP to the 4'-position of a tetraacyldisaccharide 1-phosphate intermediate (termed DS-1-P) to form tetraacyldisaccharide 1,4'-bis-phosphate (lipid IVA). This Aliivibrio salmonicida (strain LFI1238) (Vibrio salmonicida (strain LFI1238)) protein is Tetraacyldisaccharide 4'-kinase.